The primary structure comprises 732 residues: Lanosterol synthase (732 aa).

The residue at position 2 (Thr2) is an N-acetylthreonine. PFTB repeat units follow at residues 77–121 (ALNG…PLPA), 124–165 (REEI…RILG), 424–468 (PDNP…LLLQ), 483–528 (LCDA…MIDY), 560–600 (LTQG…ACMG), 612–653 (VSRA…HNTC), and 670–712 (QERG…NIFP). Asp455 functions as the Proton donor in the catalytic mechanism.

The protein belongs to the terpene cyclase/mutase family. As to quaternary structure, monomer. In terms of tissue distribution, widely expressed. Expressed in the hair bulb, the outer root sheath and hair matrix of the hair follicle epithelium. Also detected in dermal papilla, epidermis, sweat glands, sebaceous glands, and blood vessels.

It localises to the endoplasmic reticulum membrane. It carries out the reaction (S)-2,3-epoxysqualene = lanosterol. It participates in terpene metabolism; lanosterol biosynthesis; lanosterol from farnesyl diphosphate: step 3/3. Key enzyme in the cholesterol biosynthesis pathway. Catalyzes the cyclization of (S)-2,3 oxidosqualene to lanosterol, a reaction that forms the sterol nucleus. Through the production of lanosterol may regulate lens protein aggregation and increase transparency. The protein is Lanosterol synthase (LSS) of Homo sapiens (Human).